A 1744-amino-acid polypeptide reads, in one-letter code: MIEPSEDSFETMMELKNPSSKQMESSEGSSNTVEETPGSSGAQAGAQAGAQAEAQAETQVEAQAEAQAEAQVEAQVEAQAGSDSGPAQEEKEPPSGPLKEMQELPTNLLQEVEEPSSGPHQEMQELPTDLLQEVEEPSSGPHQEMQELPTDLLREVEEPSSGPYQEMQELPTDLLREVEEPSSGPYQEMQELPTDLLREVEEPSSGPYQEMQELPTDLLREVEEPSSGPYQEMQELPTDLLREVEEPSSDPCEASSNDLPQDMEESSDDGSNQESSDGSNHELSNGSNHESSFGSNPESSDVSNLESSGGSNQESSDGSQKESSYDSNPELSDNSNQELSDNSNQESSDSSNQSSDISNQEGSEPLSEASDYSMDETINSSETQSDQDDTDLGDDEEEEEEEGGEEEGQPKNSPEEVVATMGNVISLFLRMQDLKEQQRVAERLMMQAINEGRLPSLRPFSGDRRDYHEFVVLCQMTMQNYPSMLYNDELRVKFVIRHLTDLALEWANDLVEQNSPVINNFSAFLEAMSEKFEYRQTLRVAEDAMFNIRQGNRCAADYINEFRGLIPTLGWPDEVLQAHLCQGLNEEIRHYLFRIPQPNSLDNLIVLVLQLEEKLAERRALLRLPPESRPRSVAWMDAPAPEKWRVSSWLPNEFHPDIDRDHLFLLLLVRVDPYHSVAVRALVDSGAEGNYMDERFAQEHYVELYEKPYPQIIQGVDGIPIGNEPVWLCTEPLVCVHQKHYEYIEFDILPSPNFSIVLGMKWLRTHAPEVDWMRGRCTFHSPYCLRNCFTPPPPCIALETYSISLLPGLPHTYSDLADVFNPREADDETSDQPSSDGSDDLSESEPSELQQAGDSDQSGVFYESGARETLEPVSARMQEKARQQEKAREQEEYWILYDMLTDRQDYTQMVPELFDQLHGAAWFTKLELLGIKESEMRHTVTHTEDTWRASFGFGLHQMRCYRPFTMNSYSDEGNNIVHFILKDILGLFVICHGREVLVYSMSQEEHSQHVRQVLVRFRYHNIYCSLDKTQFHRQTAEILGFNISPKGVKLNKNLMNLIVGCPVPGSRRCLQSVIDLVYPYRHFVENFAVIAAPLVRQLLSSEPYYWGEEEQEALESLKRAFRKSPVLYHPKPQNPFYLETDITGSFLSASLVQTDDETGKKSTCAFYSRPLSTMEVEYPRVEMRILPIRAAFMVWCRYLENTEEPIMILLNTEDLASLNNDRLTVLLPGHWVFFFSHFNFGVMEMPAEGDTQALFRRCWNQRGFRARFLRPLLLMSIRANLRYFDRSSETEDKEDDEEEEEEDGEEEEGEEEEDGEEEEGEEEEDGEEEEEEEEDDEEEEGEEEEDGEEEEGEEEEDGEEEEGEEEEDGEEEEGEEEGEEEEEGEEEEEEEEDEEEEEEEEEEEEEEEEEEEEEEEEEEEEEEDEEEEDEEEEDEEVPSMVRELLAAIPMDHILNGLLAHFSVAQIRAVVLNFFRGLLYWKSLLGVAAVLVMLRARQPLSPVPAPNLEVARPQHRHTLRLILDSTLIASSGMATAIAQLLSQMPPLVGANTLPARELAELFLGPRCWHRNALHSQPPRGMRFTPGFWLTLCEFFGVRVNPEDDVFPDPYQHRYLELHVVGDEDVVLREALQDDLQRYRQCGLHDGLQDTSQDAQDNDVQEDLFGDQEAVTFRPRNLLDPEVLDFLNNRLLYTLGTDGRLTLLSRDQVAQALTRFLAMASRMALPSPAREQARLEELSDSDDELD.

Disordered stretches follow at residues 1–416 (MIEP…SPEE), 823–859 (READDETSDQPSSDGSDDLSESEPSELQQAGDSDQSG), and 1287–1439 (SSET…EVPS). A compositionally biased stretch (low complexity) spans 19 to 30 (SSKQMESSEGSS). Polar residues predominate over residues 31 to 40 (NTVEETPGSS). Over residues 41-80 (GAQAGAQAGAQAEAQAETQVEAQAEAQAEAQVEAQVEAQA) the composition is skewed to low complexity. The span at 269–318 (DGSNQESSDGSNHELSNGSNHESSFGSNPESSDVSNLESSGGSNQESSDG) shows a compositional bias: polar residues. A compositionally biased stretch (low complexity) spans 332-361 (SDNSNQELSDNSNQESSDSSNQSSDISNQE). Composition is skewed to acidic residues over residues 385–407 (SDQDDTDLGDDEEEEEEEGGEEE), 837–846 (GSDDLSESEP), and 1291–1437 (EDKE…DEEV). 2 consecutive transmembrane segments (helical) span residues 1473–1493 (FFRGLLYWKSLLGVAAVLVML) and 1520–1540 (LILDSTLIASSGMATAIAQLL).

In terms of tissue distribution, expressed in placenta and in various tissues in late-fetal stage.

It is found in the membrane. Functionally, plays an essential role in capillaries endothelial cells for the maintenance of feto-maternal interface and for development of the placenta. The chain is Retrotransposon-like protein 1 (Rtl1) from Mus musculus (Mouse).